A 126-amino-acid polypeptide reads, in one-letter code: Aspartate 1-decarboxylase (126 aa).

Ser-25 functions as the Schiff-base intermediate with substrate; via pyruvic acid in the catalytic mechanism. Ser-25 is subject to Pyruvic acid (Ser). Thr-57 contributes to the substrate binding site. Tyr-58 acts as the Proton donor in catalysis. Residue 73-75 coordinates substrate; that stretch reads GGA.

The protein belongs to the PanD family. As to quaternary structure, heterooctamer of four alpha and four beta subunits. Requires pyruvate as cofactor. In terms of processing, is synthesized initially as an inactive proenzyme, which is activated by self-cleavage at a specific serine bond to produce a beta-subunit with a hydroxyl group at its C-terminus and an alpha-subunit with a pyruvoyl group at its N-terminus.

Its subcellular location is the cytoplasm. The catalysed reaction is L-aspartate + H(+) = beta-alanine + CO2. Its pathway is cofactor biosynthesis; (R)-pantothenate biosynthesis; beta-alanine from L-aspartate: step 1/1. Catalyzes the pyruvoyl-dependent decarboxylation of aspartate to produce beta-alanine. This chain is Aspartate 1-decarboxylase, found in Xanthomonas campestris pv. campestris (strain B100).